The primary structure comprises 261 residues: tRNA pseudouridine synthase A (261 aa).

Catalysis depends on Asp51, which acts as the Nucleophile. Tyr109 contributes to the substrate binding site.

The protein belongs to the tRNA pseudouridine synthase TruA family. In terms of assembly, homodimer.

The catalysed reaction is uridine(38/39/40) in tRNA = pseudouridine(38/39/40) in tRNA. Its function is as follows. Formation of pseudouridine at positions 38, 39 and 40 in the anticodon stem and loop of transfer RNAs. In Shewanella baltica (strain OS195), this protein is tRNA pseudouridine synthase A.